The sequence spans 124 residues: CRISPR-associated endoribonuclease Cas2 4 (124 aa).

D40 contacts Mg(2+).

It belongs to the CRISPR-associated endoribonuclease Cas2 protein family. In terms of assembly, homodimer, forms a heterotetramer with a Cas1 homodimer. It depends on Mg(2+) as a cofactor.

Functionally, CRISPR (clustered regularly interspaced short palindromic repeat), is an adaptive immune system that provides protection against mobile genetic elements (viruses, transposable elements and conjugative plasmids). CRISPR clusters contain sequences complementary to antecedent mobile elements and target invading nucleic acids. CRISPR clusters are transcribed and processed into CRISPR RNA (crRNA). Functions as a ssRNA-specific endoribonuclease. Involved in the integration of spacer DNA into the CRISPR cassette. The polypeptide is CRISPR-associated endoribonuclease Cas2 4 (Rhodospirillum rubrum (strain ATCC 11170 / ATH 1.1.1 / DSM 467 / LMG 4362 / NCIMB 8255 / S1)).